We begin with the raw amino-acid sequence, 1542 residues long: Pleiotropic ABC efflux transporter of multiple drugs PDH1 (1542 aa).

Residues 1–14 show a composition bias toward low complexity; sequence MNTPDDSSVSSVDS. Positions 1–61 are disordered; it reads MNTPDDSSVS…APADGSAPLD (61 aa). Topologically, residues 1-517 are cytoplasmic; sequence MNTPDDSSVS…LIRNFWRIKN (517 aa). A compositionally biased stretch (basic and acidic residues) spans 24–33; it reads NVEKRIRELA. Residues 35 to 47 show a composition bias toward polar residues; that stretch reads SLTQQSLTSSNRS. One can recognise an ABC transporter 1 domain in the interval 153–409; sequence VKLLNAVWRK…FQKMGYFCPK (257 aa). 6 helical membrane-spanning segments follow: residues 518–540, 552–574, 603–625, 634–652, 662–684, and 773–792; these read SASVTLFQVFGNSAMAFILGSMF, FYFRGAAMFFAILFNAFSSLLEI, VISEIPPKIVTAILFNIIFYFLV, FFFYFLINVIAVFAMSHLF, LQEAMVPASMLLLALSMYTGFAI, and GFGVGMAYVIFFFFVYLILC. Residues 793 to 1220 lie on the Cytoplasmic side of the membrane; that stretch reads EFNEGAKQKG…LFQQYWRTPD (428 aa). Residues 825-834 show a composition bias toward basic and acidic residues; that stretch reads TKMHTDKNDI. A disordered region spans residues 825–846; it reads TKMHTDKNDIENNSESITSNAT. A compositionally biased stretch (polar residues) spans 835 to 846; sequence ENNSESITSNAT. The ABC transporter 2 domain maps to 885–1128; the sequence is FHWQNLCYDV…MIKYFEDHGA (244 aa). Residue 921-928 participates in ATP binding; it reads GASGAGKT. The next 6 membrane-spanning stretches (helical) occupy residues 1221-1241, 1256-1276, 1296-1316, 1342-1362, 1370-1390, and 1495-1515; these read YLWSKYILTIFNQLFIGFTFF, SIFMYTVIFNPLLQQYLPTFV, AFILAQIVVEVPWNIVAGTLA, LFWLFSIAFYVYVGSLGLFVI, TAAHIGSLMFTMALSFCGVMA, and GIFICFIVFDYVAGIFLYWLA. The Cytoplasmic portion of the chain corresponds to 1516–1542; sequence RVPKTNGKIAKNGKTAKVNFIRRLIPF.

The protein belongs to the ABC transporter superfamily. ABCG family. PDR (TC 3.A.1.205) subfamily. Phosphorylated by PKA. Dephosphorylated on glucose depletion and independently rephosphorylated during glucose exposure or under stress.

The protein localises to the cell membrane. Its function is as follows. Pleiotropic ABC efflux transporter that confers resistance to structurally and functionally unrelated compounds including caspofungin or azoles such as fluconazole, itraconazole, posaconazole, voriconazole, and isavuconazole. Does not play a role in the azole resistance in mature biofilms. This is Pleiotropic ABC efflux transporter of multiple drugs PDH1 from Candida glabrata (strain ATCC 2001 / BCRC 20586 / JCM 3761 / NBRC 0622 / NRRL Y-65 / CBS 138) (Yeast).